The following is a 357-amino-acid chain: MSLTRLLIKDFRNIESADLALSPGFNFLVGANGSGKTSVLEAIYTLGHGRAFRSLQIGRVIRHEQDAFVLHGRLQGEERETAIGLTKDKQGDSKVRIDGTDGHKVAELAHLMPMQLITPEGFTLLNGGPKYRRAFLDWGCFHNEAGFFTAWSNLKRLVKQRNAALRQVSRYAQLRPWDLELIPLAEQISRWRAEYSAAIVEDMADTCQQFLPEFTLTFSFQRGWEKETDYAEVLERNFERDRMLTYTAHGPHKADFRIRADGAPVEDTLSRGQLKLLMCALRLAQGEFLTRVSGRRCLYLIDDFASELDDARRGLLSSRLKATQSQVFVSAISAEHVMDMSDKNSKMFRVEKGKITD.

30-37 (GANGSGKT) serves as a coordination point for ATP.

The protein belongs to the RecF family.

Its subcellular location is the cytoplasm. Functionally, the RecF protein is involved in DNA metabolism; it is required for DNA replication and normal SOS inducibility. RecF binds preferentially to single-stranded, linear DNA. It also seems to bind ATP. This is DNA replication and repair protein RecF from Klebsiella pneumoniae subsp. pneumoniae (strain ATCC 700721 / MGH 78578).